The chain runs to 288 residues: Energy-coupling factor transporter ATP-binding protein EcfA2 (288 aa).

The region spanning 3–246 (IKLEQLGYCY…PDELVDLGLS (244 aa)) is the ABC transporter domain. Residue 40-47 (GHTGSGKS) participates in ATP binding.

This sequence belongs to the ABC transporter superfamily. Energy-coupling factor EcfA family. As to quaternary structure, forms a stable energy-coupling factor (ECF) transporter complex composed of 2 membrane-embedded substrate-binding proteins (S component), 2 ATP-binding proteins (A component) and 2 transmembrane proteins (T component).

The protein localises to the cell membrane. In terms of biological role, ATP-binding (A) component of a common energy-coupling factor (ECF) ABC-transporter complex. Unlike classic ABC transporters this ECF transporter provides the energy necessary to transport a number of different substrates. The polypeptide is Energy-coupling factor transporter ATP-binding protein EcfA2 (Listeria monocytogenes serotype 4b (strain F2365)).